Here is a 359-residue protein sequence, read N- to C-terminus: Tyrosine-protein phosphatase non-receptor type 7 (359 aa).

The disordered stretch occupies residues 1–34 (MVQACEGRSRAQLPTLSLGADMTQPPPAKAPAKK). An interaction with MAP kinases region spans residues 38-51 (LQERRGSSVALMLD). The residue at position 44 (serine 44) is a Phosphoserine. Threonine 66 carries the phosphothreonine modification. Phosphoserine is present on residues serine 93 and serine 143. In terms of domain architecture, Tyrosine-protein phosphatase spans 97 to 349 (LEEEFLKIPS…QFLHHTLALY (253 aa)). Substrate-binding positions include aspartate 257, 290 to 296 (CSAGIGR), and glutamine 334. Cysteine 290 serves as the catalytic Phosphocysteine intermediate. At cysteine 290 the chain carries Cysteine sulfenic acid (-SOH).

It belongs to the protein-tyrosine phosphatase family. Non-receptor class subfamily. Post-translationally, oxidized at active site cysteine. Treatment with pervanadate (vanadate and H(2)O(2)) or with antigen enhanced oxidation of active site cysteine.

It is found in the cytoplasm. The protein localises to the cytoskeleton. It catalyses the reaction O-phospho-L-tyrosyl-[protein] + H2O = L-tyrosyl-[protein] + phosphate. Inhibited in cells after FCER1A triggering. In terms of biological role, may play a role in the regulation of T and B-lymphocyte development and signal transduction. The protein is Tyrosine-protein phosphatase non-receptor type 7 (Ptpn7) of Rattus norvegicus (Rat).